A 1175-amino-acid polypeptide reads, in one-letter code: Major DNA-binding protein (1175 aa).

Residues Cys496–His509 fold into a zinc finger. A Required for filament formation motif is present at residues Phe825–Trp826. The segment at Lys1151–Leu1175 is required for nuclear localization.

It belongs to the herpesviridae major DNA-binding protein family. Homooligomers. Forms double-helical filaments necessary for the formation of replication compartments within the host nucleus. Interacts with the origin-binding protein. Interacts with the helicase primase complex; this interaction stimulates primer synthesis activity of the helicase-primase complex. Interacts with the DNA polymerase. Interacts with the alkaline exonuclease; this interaction increases its nuclease processivity.

It is found in the host nucleus. In terms of biological role, plays several crucial roles in viral infection. Participates in the opening of the viral DNA origin to initiate replication by interacting with the origin-binding protein. May disrupt loops, hairpins and other secondary structures present on ssDNA to reduce and eliminate pausing of viral DNA polymerase at specific sites during elongation. Promotes viral DNA recombination by performing strand-transfer, characterized by the ability to transfer a DNA strand from a linear duplex to a complementary single-stranded DNA circle. Can also catalyze the renaturation of complementary single strands. Additionally, reorganizes the host cell nucleus, leading to the formation of prereplicative sites and replication compartments. This process is driven by the protein which can form double-helical filaments in the absence of DNA. This Suid herpesvirus 1 (SuHV-1) protein is Major DNA-binding protein.